Here is a 169-residue protein sequence, read N- to C-terminus: Ribosome maturation factor RimP (169 aa).

It belongs to the RimP family.

Its subcellular location is the cytoplasm. Functionally, required for maturation of 30S ribosomal subunits. This is Ribosome maturation factor RimP from Coprothermobacter proteolyticus (strain ATCC 35245 / DSM 5265 / OCM 4 / BT).